The sequence spans 361 residues: Mannose-1-phosphate guanyltransferase (361 aa).

Thr-153 carries the phosphothreonine modification. Lys-244 participates in a covalent cross-link: Glycyl lysine isopeptide (Lys-Gly) (interchain with G-Cter in ubiquitin).

The protein belongs to the transferase hexapeptide repeat family.

It localises to the cytoplasm. It catalyses the reaction alpha-D-mannose 1-phosphate + GTP + H(+) = GDP-alpha-D-mannose + diphosphate. It functions in the pathway nucleotide-sugar biosynthesis; GDP-alpha-D-mannose biosynthesis; GDP-alpha-D-mannose from alpha-D-mannose 1-phosphate (GTP route): step 1/1. Its function is as follows. Involved in cell wall synthesis where it is required for glycosylation. Involved in cell cycle progression through cell-size checkpoint. This is Mannose-1-phosphate guanyltransferase (PSA1) from Saccharomyces cerevisiae (strain ATCC 204508 / S288c) (Baker's yeast).